The following is a 32-amino-acid chain: Fibrinolytic enzyme (32 aa).

Post-translationally, the N-terminus is blocked.

With respect to regulation, inhibited by phenylmethanesulfonyl fluoride (PMSF). Not inhibited by EDTA, EGTA, beta-mercaptoethanol, indoacetamide, benzamidine, aprotinin, pepstatin A and trypsin inhibitor. In terms of biological role, plasmin-like serine protease. Has fibrinolytic and fibrinogenolytic but not plasminogenolytic activity. Cleaves after Arg and Lys residues. This Hediste japonica (Polychaete worm) protein is Fibrinolytic enzyme.